The primary structure comprises 144 residues: Transcription antitermination protein NusB (144 aa).

It belongs to the NusB family.

Its function is as follows. Involved in transcription antitermination. Required for transcription of ribosomal RNA (rRNA) genes. Binds specifically to the boxA antiterminator sequence of the ribosomal RNA (rrn) operons. This is Transcription antitermination protein NusB from Paraburkholderia xenovorans (strain LB400).